We begin with the raw amino-acid sequence, 206 residues long: Probable N-acetyltransferase 14 (206 aa).

The N-acetyltransferase domain occupies 55 to 206 (LRFVLASFAL…TLVREFSKDL (152 aa)). Residues 57 to 77 (FVLASFALALLLPVFLAVTAV) traverse the membrane as a helical segment.

This sequence belongs to the camello family.

The protein localises to the membrane. In terms of biological role, probable acetyltransferase. May act as a transcription factor regulating the expression of coproporphyrinogen oxidase by binding to a promoter regulatory element. The chain is Probable N-acetyltransferase 14 (NAT14) from Macaca fascicularis (Crab-eating macaque).